Reading from the N-terminus, the 1215-residue chain is Inner capsid protein VP3 (1215 aa).

Positions 1–81 (MPRRPRRNAK…RVDNDGDVIT (81 aa)) are disordered. Low complexity predominate over residues 21–44 (LVAPAANASVSSTVNTTTSPTLAA). The segment at 118-141 (YRCNVCNAEFPSMSAMTEHLRTSH) adopts a C2H2-type zinc-finger fold.

This sequence belongs to the turreted BTV-fold inner capsid family. In terms of assembly, homodecamer; each decamer is made up of two conformers of VP2, called VP2A and VP2B. 12 homodecamers assemble to form an icosahedral capsid. Interacts with VP6.

It is found in the virion. In terms of biological role, inner capsid protein that self-assembles to form an icosahedral capsid with a T=2 symmetry, which consists of 120 copies of VP2, with channels at each of its five-fold vertices. This capsid constitutes the innermost concentric layer of the viral mature particle. This Ctenopharyngodon idella (Grass carp) protein is Inner capsid protein VP3 (S3).